The chain runs to 140 residues: Nucleoside diphosphate kinase (140 aa).

K11, F59, R87, T93, R104, and N114 together coordinate ATP. The active-site Pros-phosphohistidine intermediate is H117.

The protein belongs to the NDK family. In terms of assembly, homotetramer. Mg(2+) serves as cofactor.

The protein resides in the cytoplasm. It carries out the reaction a 2'-deoxyribonucleoside 5'-diphosphate + ATP = a 2'-deoxyribonucleoside 5'-triphosphate + ADP. The enzyme catalyses a ribonucleoside 5'-diphosphate + ATP = a ribonucleoside 5'-triphosphate + ADP. Major role in the synthesis of nucleoside triphosphates other than ATP. The ATP gamma phosphate is transferred to the NDP beta phosphate via a ping-pong mechanism, using a phosphorylated active-site intermediate. In Gluconacetobacter diazotrophicus (strain ATCC 49037 / DSM 5601 / CCUG 37298 / CIP 103539 / LMG 7603 / PAl5), this protein is Nucleoside diphosphate kinase.